We begin with the raw amino-acid sequence, 349 residues long: Homeobox protein engrailed (349 aa).

Disordered stretches follow at residues 26–53 (DGPS…SPLS), 146–210 (GKET…PLPP), 228–252 (PSSG…EKRP), and 327–349 (STIP…ARIE). Composition is skewed to basic and acidic residues over residues 173–188 (QMKK…RTES) and 242–252 (DKAITPDEKRP). The segment at residues 249–308 (EKRPRTAFTAEQLSRLKHEFNENRYLTERRRQDLARELGLHENQIKIWFQNNRAKLKKSS) is a DNA-binding region (homeobox).

This sequence belongs to the engrailed homeobox family.

The protein localises to the nucleus. The sequence is that of Homeobox protein engrailed from Artemia franciscana (Brine shrimp).